The primary structure comprises 222 residues: Sigma non-opioid intracellular receptor 1 (222 aa).

The Lumenal segment spans residues 1 to 6; the sequence is MSLIRT. A helical transmembrane segment spans residues 7 to 29; it reads ILKLVVVVGFLSLTVQFIRHWMA. Residues 30-222 are Cytoplasmic-facing; sequence NKQYVFTKEE…STFLTESGVL (193 aa). Residues 97–104 are important for ligand-binding; the sequence is SLTEYVLL. The interval 175–222 is C-terminal hydrophobic region; it reads FIPSTLGFALADTMFSTQDFLTLFYTARVYVKGMILEASTFLTESGVL.

The protein belongs to the ERG2 family. In terms of assembly, homotrimer.

It localises to the nucleus inner membrane. Its subcellular location is the nucleus outer membrane. It is found in the nucleus envelope. The protein resides in the cytoplasmic vesicle. The protein localises to the endoplasmic reticulum membrane. It localises to the membrane. Functionally, may function in lipid transport from the endoplasmic reticulum and be involved in a wide array of cellular functions probably through regulation of the biogenesis of lipid microdomains at the plasma membrane. May regulate calcium efflux at the endoplasmic reticulum. The protein is Sigma non-opioid intracellular receptor 1 (sigmar1) of Danio rerio (Zebrafish).